Here is a 218-residue protein sequence, read N- to C-terminus: Small ribosomal subunit protein uS3 (218 aa).

The region spanning 38-106 is the KH type-2 domain; it reads IREYINKRLQ…REHINIVEIK (69 aa).

This sequence belongs to the universal ribosomal protein uS3 family. In terms of assembly, part of the 30S ribosomal subunit. Forms a tight complex with proteins S10 and S14.

Functionally, binds the lower part of the 30S subunit head. Binds mRNA in the 70S ribosome, positioning it for translation. In Geobacillus stearothermophilus (Bacillus stearothermophilus), this protein is Small ribosomal subunit protein uS3.